The chain runs to 152 residues: Calmodulin (152 aa).

A2 bears the N-acetylalanine mark. EF-hand domains are found at residues E10–N45, P46–D81, D83–K118, and L119–N152. 20 residues coordinate Ca(2+): D23, D25, D27, S29, E34, D59, D61, N63, N65, E70, D96, D98, N100, Y102, E107, D132, D134, D136, Q138, and E143.

The protein belongs to the calmodulin family. As to quaternary structure, interacts with cmbB, numA/nucleomorphin, pgkA/phosphoglycerate kinase, and thyB/thymidine kinase in the presence of Ca(2+). Interacts with dwwA in the absence of Ca(2+). The N-terminus is blocked. In terms of processing, trimethylation of Lys-118 observed in other calmodulins is absent here.

Its subcellular location is the contractile vacuole. Functionally, calmodulin mediates the control of a large number of enzymes, ion channels and other proteins by Ca(2+). Among the enzymes to be stimulated by the calmodulin-Ca(2+) complex are a number of protein kinases and phosphatases. This Dictyostelium discoideum (Social amoeba) protein is Calmodulin (calA).